A 205-amino-acid chain; its full sequence is Small ribosomal subunit protein uS4 (205 aa).

The tract at residues 26–47 (PVNKREYGPGQHGQRRKQKPSD) is disordered. The 61-residue stretch at 94 to 154 (RRLDAVVYRL…EKSKHLAIVL (61 aa)) folds into the S4 RNA-binding domain.

It belongs to the universal ribosomal protein uS4 family. Part of the 30S ribosomal subunit. Contacts protein S5. The interaction surface between S4 and S5 is involved in control of translational fidelity.

Functionally, one of the primary rRNA binding proteins, it binds directly to 16S rRNA where it nucleates assembly of the body of the 30S subunit. With S5 and S12 plays an important role in translational accuracy. The sequence is that of Small ribosomal subunit protein uS4 from Gluconacetobacter diazotrophicus (strain ATCC 49037 / DSM 5601 / CCUG 37298 / CIP 103539 / LMG 7603 / PAl5).